The sequence spans 285 residues: Phosphatidylserine decarboxylase proenzyme (285 aa).

Catalysis depends on charge relay system; for autoendoproteolytic cleavage activity residues Asp-89, His-146, and Ser-252. The active-site Schiff-base intermediate with substrate; via pyruvic acid; for decarboxylase activity is the Ser-252. The residue at position 252 (Ser-252) is a Pyruvic acid (Ser); by autocatalysis.

Belongs to the phosphatidylserine decarboxylase family. PSD-B subfamily. Prokaryotic type I sub-subfamily. As to quaternary structure, heterodimer of a large membrane-associated beta subunit and a small pyruvoyl-containing alpha subunit. Requires pyruvate as cofactor. Is synthesized initially as an inactive proenzyme. Formation of the active enzyme involves a self-maturation process in which the active site pyruvoyl group is generated from an internal serine residue via an autocatalytic post-translational modification. Two non-identical subunits are generated from the proenzyme in this reaction, and the pyruvate is formed at the N-terminus of the alpha chain, which is derived from the carboxyl end of the proenzyme. The autoendoproteolytic cleavage occurs by a canonical serine protease mechanism, in which the side chain hydroxyl group of the serine supplies its oxygen atom to form the C-terminus of the beta chain, while the remainder of the serine residue undergoes an oxidative deamination to produce ammonia and the pyruvoyl prosthetic group on the alpha chain. During this reaction, the Ser that is part of the protease active site of the proenzyme becomes the pyruvoyl prosthetic group, which constitutes an essential element of the active site of the mature decarboxylase.

The protein localises to the cell membrane. It catalyses the reaction a 1,2-diacyl-sn-glycero-3-phospho-L-serine + H(+) = a 1,2-diacyl-sn-glycero-3-phosphoethanolamine + CO2. It participates in phospholipid metabolism; phosphatidylethanolamine biosynthesis; phosphatidylethanolamine from CDP-diacylglycerol: step 2/2. Functionally, catalyzes the formation of phosphatidylethanolamine (PtdEtn) from phosphatidylserine (PtdSer). The polypeptide is Phosphatidylserine decarboxylase proenzyme (Vibrio vulnificus (strain CMCP6)).